Here is a 79-residue protein sequence, read N- to C-terminus: D-alanyl carrier protein (79 aa).

The 77-residue stretch at 1–77 (MDVKAEVIEI…KIVEGVTELR (77 aa)) folds into the Carrier domain. Ser35 carries the O-(pantetheine 4'-phosphoryl)serine modification.

The protein belongs to the DltC family. 4'-phosphopantetheine is transferred from CoA to a specific serine of apo-DCP.

It localises to the cytoplasm. The protein operates within cell wall biogenesis; lipoteichoic acid biosynthesis. Functionally, carrier protein involved in the D-alanylation of lipoteichoic acid (LTA). The loading of thioester-linked D-alanine onto DltC is catalyzed by D-alanine--D-alanyl carrier protein ligase DltA. The DltC-carried D-alanyl group is further transferred to cell membrane phosphatidylglycerol (PG) by forming an ester bond, probably catalyzed by DltD. D-alanylation of LTA plays an important role in modulating the properties of the cell wall in Gram-positive bacteria, influencing the net charge of the cell wall. This chain is D-alanyl carrier protein, found in Streptococcus thermophilus (strain CNRZ 1066).